Here is a 703-residue protein sequence, read N- to C-terminus: Peptide transporter CstA (703 aa).

The next 16 membrane-spanning stretches (helical) occupy residues 6-26 (TKIL…YLAL), 29-49 (GESV…MIGY), 87-107 (VLFG…GPIL), 118-138 (LWIL…VLFI), 162-182 (VAMV…AMVV), 190-210 (PWGL…GIYM), 221-241 (ASII…VIAA), 256-276 (LAIV…WFLL), 282-302 (LSTF…VLVA), 319-339 (GPVF…CGAI), 374-394 (AVAI…YFAI), 463-483 (LMAF…LTAV), 514-534 (GLLA…QGAI), 547-567 (FGVS…TILV), 574-594 (YTWV…YGGI), and 660-680 (AILC…CIGI).

It belongs to the peptide transporter carbon starvation (CstA) (TC 2.A.114) family.

The protein resides in the cell inner membrane. Its function is as follows. Involved in the uptake of dipeptides and tripeptides. May influence host-pathogen interactions. Involved in motility and agglutination, and has a role in stimulation of dendritic cells. The chain is Peptide transporter CstA from Campylobacter jejuni subsp. jejuni serotype O:2 (strain ATCC 700819 / NCTC 11168).